A 412-amino-acid polypeptide reads, in one-letter code: Protein png-1 (412 aa).

Positions 150, 153, 182, and 185 each coordinate Zn(2+). The segment at 363–412 (AAAARGGRSSPDNKSGANMMGSPATGDIKRPIPEDAPVPDVPSLWPTYGP) is disordered.

The protein belongs to the transglutaminase-like superfamily. PNGase family.

In Neurospora crassa (strain ATCC 24698 / 74-OR23-1A / CBS 708.71 / DSM 1257 / FGSC 987), this protein is Protein png-1 (un-7).